Consider the following 546-residue polypeptide: Src substrate cortactin (546 aa).

Residues 1 to 28 form a disordered region; that stretch reads MWKASAGHAVSITQDDGGADDWETDPDF. Positions 17-28 are enriched in acidic residues; it reads GGADDWETDPDF. 6 Cortactin repeats span residues 80–116, 117–153, 154–190, 191–227, 228–264, and 265–301; these read ASHG…SQVD, SVRG…SQKD, YSSG…SQKD, YSKG…SQKD, YVKG…SQKD, and YKTG…SQQD. Lysine 87 and lysine 107 each carry N6-acetyllysine. Serine 113 carries the phosphoserine modification. Arginine 119 is subject to Omega-N-methylarginine. Residue lysine 124 is modified to N6-acetyllysine. Lysine 144 bears the N6-acetyllysine; alternate mark. Residue lysine 144 forms a Glycyl lysine isopeptide (Lys-Gly) (interchain with G-Cter in SUMO1); alternate linkage. A Glycyl lysine isopeptide (Lys-Gly) (interchain with G-Cter in SUMO2); alternate cross-link involves residue lysine 144. Serine 150 is modified (phosphoserine). N6-acetyllysine is present on residues lysine 152, lysine 161, and lysine 171. The residue at position 181 (lysine 181) is an N6-acetyllysine; alternate. Lysine 181 is covalently cross-linked (Glycyl lysine isopeptide (Lys-Gly) (interchain with G-Cter in SUMO1); alternate). Residue lysine 181 forms a Glycyl lysine isopeptide (Lys-Gly) (interchain with G-Cter in SUMO2); alternate linkage. 2 positions are modified to N6-acetyllysine: lysine 193 and lysine 198. Lysine 218 participates in a covalent cross-link: Glycyl lysine isopeptide (Lys-Gly) (interchain with G-Cter in SUMO1). Lysine 235 is subject to N6-acetyllysine. Serine 261 is subject to Phosphoserine. Lysine 272 bears the N6-acetyllysine mark. An N6-acetyllysine; alternate modification is found at lysine 295. Residue lysine 295 forms a Glycyl lysine isopeptide (Lys-Gly) (interchain with G-Cter in SUMO2); alternate linkage. The stretch at 302–324 is one Cortactin 7; truncated repeat; the sequence is YAKGFGGKYGVQKDRMDKNASTF. An N6-acetyllysine mark is found at lysine 304, lysine 309, lysine 314, and lysine 346. Residues 348–401 are a coiled coil; sequence SNIRANFENLAKEREQEDRRKAEAERAQRMAKERQEQEEARRKLEEQARAKKQT. The interval 355–424 is disordered; sequence ENLAKEREQE…PPSSPIYEDA (70 aa). The span at 357–396 shows a compositional bias: basic and acidic residues; that stretch reads LAKEREQEDRRKAEAERAQRMAKERQEQEEARRKLEEQAR. Threonine 401 carries the post-translational modification Phosphothreonine. A phosphoserine mark is found at serine 405, serine 407, serine 417, and serine 418. Phosphotyrosine occurs at positions 421 and 442. Phosphoserine is present on serine 443. Tyrosine 466 is modified (phosphotyrosine; by FAK1). 2 positions are modified to phosphotyrosine; by SRC: tyrosine 482 and tyrosine 485. Positions 488–546 constitute an SH3 domain; that stretch reads DLGITAIALYDYQAAGDDEISFDPDDIITNIEMIDDGWWRGVCKGRYGLFPANYVELRQ.

Part of a complex composed of NEDD9, AURKA and CTTN; within the complex NEDD9 acts as a scaffold protein and is required for complex formation. Interacts (via N-terminus) with NEDD9. Identified in a complex containing FGFR4, NCAM1, CDH2, PLCG1, FRS2, SRC, SHC1, GAP43 and CTTN. Forms a complex with ABL1 and MYLK. Interacts with SHANK2 and SHANK3 (via its SH3 domain). Interacts with PLXDC2 and SRCIN1. Interacts with SAMSN1 (via SH3 domain). Interacts (via SH3 domain) with ASAP1 (via Pro-rich region). Interacts (via SH3 domain) with DNM2. Interacts with ACTN1. Interacts with FER. Interacts with KCNA2 (via non-phosphorylated C-terminus). Interacts with FGD1. Interacts with ABL2. Interacts with CTTNBP2NL; this interaction may target CTTN to stress fibers. Interacts with CTTNBP2; this interaction may target CTTN at the cell cortex or dendritic spines. Interacts with KCNH1. Interacts (via SH3 domain) with DIP2A (via N-terminus); the interaction enhances CTTN acetylation and is required for proper synaptic transmission. Interacts with XIRP1 (via N-terminus); the interaction promotes CTTN localization to intercalated disks in cardiomyocytes. In terms of processing, acetylated. Post-translationally, phosphorylated by FER. Phosphorylated in response to FGR activation. Phosphorylation by SRC promotes MYLK binding. Phosphorylated on tyrosine residues in response to CHRM1 activation. Phosphorylated by PTK2/FAK1 in response to cell adhesion. Tyrosine phosphorylation in transformed cells may contribute to cellular growth regulation and transformation. Phosphorylated by PKN2 at both serine and threonine residues in a GTP-bound Rac1-dependent manner in hyaluronan-induced astrocytes and hence down-regulated CTTN ability to associate with filamentous actin. In terms of tissue distribution, expressed at intercalated disks in the heart (at protein level). Expressed in most tissues, except in B-lymphocytes or plasma cells.

The protein resides in the cytoplasm. The protein localises to the cytoskeleton. Its subcellular location is the cell projection. It is found in the lamellipodium. It localises to the ruffle. The protein resides in the dendrite. The protein localises to the cell membrane. Its subcellular location is the podosome. It is found in the cell junction. It localises to the focal adhesion. The protein resides in the membrane. The protein localises to the clathrin-coated pit. Its subcellular location is the dendritic spine. It is found in the cell cortex. It localises to the endoplasmic reticulum. In terms of biological role, contributes to the organization of the actin cytoskeleton and cell shape. Plays a role in the formation of lamellipodia and in cell migration. Plays a role in the regulation of neuron morphology, axon growth and formation of neuronal growth cones. Through its interaction with CTTNBP2, involved in the regulation of neuronal spine density. Plays a role in focal adhesion assembly and turnover. In complex with ABL1 and MYLK regulates cortical actin-based cytoskeletal rearrangement critical to sphingosine 1-phosphate (S1P)-mediated endothelial cell (EC) barrier enhancement. Plays a role in intracellular protein transport and endocytosis, and in modulating the levels of potassium channels present at the cell membrane. Plays a role in receptor-mediated endocytosis via clathrin-coated pits. Required for stabilization of KCNH1 channels at the cell membrane. The chain is Src substrate cortactin (Cttn) from Mus musculus (Mouse).